The following is a 200-amino-acid chain: MRIILLGPPGAGKGTQSERIVQRFGIPQLSTGDMLRAAVAAGTPVGLEAKAVMESGGLVSDRIVVGIVADRIEEPDARRGFILDGFPRTVAQAEALGEMLASKGLSLSAVVELKVDENALVGRIEKRAAETLARGQAVRKDDTPEVFKQRLEAYRAQTAPLSAYYAQKGTLETVDGMQPIDKVTADLMAVLEPHEERVAS.

An ATP-binding site is contributed by G10–T15. The segment at S30 to V59 is NMP. Residues T31, R36, G57–V59, G85–R88, and Q92 each bind AMP. The tract at residues K126–D142 is LID. Position 127 (R127) interacts with ATP. Residues R139 and R150 each coordinate AMP. Q178 is an ATP binding site.

Belongs to the adenylate kinase family. Monomer.

It localises to the cytoplasm. It catalyses the reaction AMP + ATP = 2 ADP. It participates in purine metabolism; AMP biosynthesis via salvage pathway; AMP from ADP: step 1/1. Catalyzes the reversible transfer of the terminal phosphate group between ATP and AMP. Plays an important role in cellular energy homeostasis and in adenine nucleotide metabolism. This Methylobacterium radiotolerans (strain ATCC 27329 / DSM 1819 / JCM 2831 / NBRC 15690 / NCIMB 10815 / 0-1) protein is Adenylate kinase.